A 333-amino-acid polypeptide reads, in one-letter code: Homeobox protein HMX1 (333 aa).

3 disordered regions span residues 1–74, 86–109, and 139–204; these read MAQD…STSA, GTEGGGGTRRAAAGGGGGRGAPRC, and CASP…KKKT. Over residues 17–30 the composition is skewed to polar residues; that stretch reads DYTQGNTDRSTAAA. Residues 87–105 show a composition bias toward gly residues; it reads TEGGGGTRRAAAGGGGGRG. Positions 144 to 158 are enriched in basic and acidic residues; sequence TSDRDSPELPEDTER. A compositionally biased stretch (gly residues) spans 159–176; sequence AGGGGRAAARGPAGGRQS. Residues 181–192 are compositionally biased toward acidic residues; that stretch reads EEEEERGEEAGE. Residues 201–260 constitute a DNA-binding region (homeobox); that stretch reads KKKTRTVFSRSQVFQLESTFDVKRYLSSSERAGLAASLHLTETQVKIWFQNRRNKWKRQL. An HMX family specific domain 1 motif is present at residues 261 to 271; the sequence is AADLEAANLSH.

The protein belongs to the HMX homeobox family.

It is found in the nucleus. DNA-binding protein that binds to the 5'-CAAG-3' core sequence. May function as a transcriptional repressor. Seems to act as a transcriptional antagonist of NKX2-5. May play an important role in the development of craniofacial structures such as the eye and ear. This Gallus gallus (Chicken) protein is Homeobox protein HMX1 (HMX1).